Consider the following 156-residue polypeptide: Transcription elongation factor GreA (156 aa).

A coiled-coil region spans residues 1–32; it reads MKKVRLTREGYEKLKQELEELKRKFMYEISER.

Belongs to the GreA/GreB family.

Its function is as follows. Necessary for efficient RNA polymerase transcription elongation past template-encoded arresting sites. The arresting sites in DNA have the property of trapping a certain fraction of elongating RNA polymerases that pass through, resulting in locked ternary complexes. Cleavage of the nascent transcript by cleavage factors such as GreA or GreB allows the resumption of elongation from the new 3'terminus. GreA releases sequences of 2 to 3 nucleotides. This is Transcription elongation factor GreA from Thermotoga neapolitana (strain ATCC 49049 / DSM 4359 / NBRC 107923 / NS-E).